We begin with the raw amino-acid sequence, 264 residues long: uncharacterized protein (264 aa).

This is an uncharacterized protein from Shigella flexneri.